Reading from the N-terminus, the 220-residue chain is MEHPVFERDPSQKSEAERREVPPLLKLALELGPLLVFFFANARGEMLIERFPVLASIGAPIFLATALFMGATVIALAISWTMTRTLPIMPLVSGIVVLVFGALTLWLHNDTFIKMKPTIVNTLFGAILLGGLFFGKSLLGYVFDSAFRLDAEGWRKLTLRWGLFFIFLAVVNEVVWRNFSTDAWVSFKVWGIMPITIVFTLLQMPLIQKHSLTEDNKTAS.

A run of 6 helical transmembrane segments spans residues 20–40 (EVPPLLKLALELGPLLVFFFA), 57–77 (IGAPIFLATALFMGATVIALA), 86–106 (LPIMPLVSGIVVLVFGALTLW), 123–143 (LFGAILLGGLFFGKSLLGYVF), 156–176 (KLTLRWGLFFIFLAVVNEVVW), and 187–207 (FKVWGIMPITIVFTLLQMPLI).

This sequence belongs to the YciB family.

The protein localises to the cell inner membrane. In terms of biological role, plays a role in cell envelope biogenesis, maintenance of cell envelope integrity and membrane homeostasis. The polypeptide is Inner membrane-spanning protein YciB (Brucella anthropi (strain ATCC 49188 / DSM 6882 / CCUG 24695 / JCM 21032 / LMG 3331 / NBRC 15819 / NCTC 12168 / Alc 37) (Ochrobactrum anthropi)).